Reading from the N-terminus, the 468-residue chain is 6-phospho-beta-galactosidase (468 aa).

The D-galactose 6-phosphate site is built by glutamine 19, histidine 116, asparagine 159, glutamate 160, and asparagine 297. Glutamate 160 serves as the catalytic Proton donor. Glutamate 375 (nucleophile) is an active-site residue. Serine 428, tryptophan 429, lysine 435, and tyrosine 437 together coordinate D-galactose 6-phosphate.

Belongs to the glycosyl hydrolase 1 family.

It catalyses the reaction a 6-phospho-beta-D-galactoside + H2O = D-galactose 6-phosphate + an alcohol. The protein operates within carbohydrate metabolism; lactose degradation; D-galactose 6-phosphate and beta-D-glucose from lactose 6-phosphate: step 1/1. The chain is 6-phospho-beta-galactosidase from Streptococcus pyogenes serotype M3 (strain ATCC BAA-595 / MGAS315).